The sequence spans 263 residues: Small ribosomal subunit protein uS2 (263 aa).

Ser-2 carries the post-translational modification N-acetylserine. The segment covering Glu-211–Glu-242 has biased composition (acidic residues). The disordered stretch occupies residues Glu-211–Phe-263. A compositionally biased stretch (low complexity) spans Asn-246–Phe-263.

The protein belongs to the universal ribosomal protein uS2 family. Component of the small ribosomal subunit. Mature ribosomes consist of a small (40S) and a large (60S) subunit. The 40S subunit contains about 33 different proteins and 1 molecule of RNA (18S). The 60S subunit contains about 49 different proteins and 3 molecules of RNA (25S, 5.8S and 5S). Interacts with RPS21.

The protein resides in the cytoplasm. In terms of biological role, required for the assembly and/or stability of the 40S ribosomal subunit. Required for the processing of the 20S rRNA-precursor to mature 18S rRNA in a late step of the maturation of 40S ribosomal subunits. This Komagataella phaffii (strain GS115 / ATCC 20864) (Yeast) protein is Small ribosomal subunit protein uS2.